Reading from the N-terminus, the 144-residue chain is Transcription antitermination protein NusB (144 aa).

It belongs to the NusB family.

In terms of biological role, involved in transcription antitermination. Required for transcription of ribosomal RNA (rRNA) genes. Binds specifically to the boxA antiterminator sequence of the ribosomal RNA (rrn) operons. The polypeptide is Transcription antitermination protein NusB (Pelotomaculum thermopropionicum (strain DSM 13744 / JCM 10971 / SI)).